The sequence spans 444 residues: MEQDSDLESGRATNQRPPRVRVRGAGVRGRGRVRRRALSEGQRRSLFRLDDLQLPDSLYVTRALQRDHALEMPRGQVDFSLIEAEERRAGPTDEWYFESVKTYRAKPGDDLQTLIKNYAKISLECGAVYEINSKIVVTGACYIIGNCAVLRANLPVGTAMFEVLNVDVIPSIGFMERIVFSNILFDCRSTTAVVCCISERNTLFHNCVFSGPHMLCLDIRAGAEVRGCHFVGAVCALRSKGLYSVRVRNSIFEKCAFGVVSGSKASISHSMFKDCACCIMLGGQGTIAHSHFMATTCTDTPMNLQLCTCEGNGSHVVPLGNIHFASNREAPWPTFNANVLVRVRLYMGRRRGVFHPKQSTFSMCVIAAPRGVVQRIYLFSVYDATCAILQLGEAGDAATERLCTCGMRHNTPSLRAAYVTDTRIDREINSQDTAEFFSSDEDNL.

Residues 1–27 (MEQDSDLESGRATNQRPPRVRVRGAGV) form a disordered region. A phosphoserine mark is found at Ser438 and Ser439.

It belongs to the adenoviridae E1B 55 kDa protein family. Interacts with host PML-4 and PML-5; this interaction promotes efficient subnuclear targeting of E1B-55K to PML nuclear bodies. Interacts with E4-ORF3 protein. Interacts with E4-ORF6 protein.

Its subcellular location is the host nucleus. It is found in the host cytoplasm. Functionally, plays a major role to prevent cellular inhibition of viral genome replication. Assembles an SCF-like E3 ubiquitin ligase complex based on the cellular proteins ELOB, ELOC, CUL5 and RBX1, in cooperation with viral E4orf6. This viral RING-type ligase ubiquitinates cellular substrates and targets them to proteasomal degradation: TP53/p53, LIG4, MRE11-RAD50-NBS1 (MRN) complex, ITGA3, DAXX and BLM. E1B-55K probably acts as the substrate-specific adapter of the SCF-like E3 ubiquitin ligase complex. Degradation of host TP53/p53 activity is essential for preventing E1A-induced TP53 accumulation that would otherwise lead to cell apoptosis and growth arrest. E1B-55K also inactivates TP53 transcription-factor activity by binding its transactivation domain. E1B-55K also functions as a SUMO1 E3 ligase for TP53 which causes the latter to be sequestered in promyelocytic leukemia (PML) nuclear bodies thereby contributing to maximal inhibition of TP53 function. The sequence is that of E1B 55 kDa protein from Canis lupus familiaris (Dog).